Reading from the N-terminus, the 61-residue chain is Small ribosomal subunit protein uS14 (61 aa).

Zn(2+) contacts are provided by Cys-24, Cys-27, Cys-40, and Cys-43.

This sequence belongs to the universal ribosomal protein uS14 family. Zinc-binding uS14 subfamily. As to quaternary structure, part of the 30S ribosomal subunit. Contacts proteins S3 and S10. Requires Zn(2+) as cofactor.

Binds 16S rRNA, required for the assembly of 30S particles and may also be responsible for determining the conformation of the 16S rRNA at the A site. The polypeptide is Small ribosomal subunit protein uS14 (Clostridium beijerinckii (strain ATCC 51743 / NCIMB 8052) (Clostridium acetobutylicum)).